The following is a 43-amino-acid chain: Hemolysin H3C (43 aa).

Residue M1 is modified to N-formylmethionine.

This sequence belongs to the staphylococcal hemolytic protein family.

It localises to the secreted. In terms of biological role, virulence factor. Causes hemolysis of erythrocytes from sheep (HD(50)=2.63 mM), rabbit (HD(50)=2.37 mM), guinea pig (HD(50)=1.98 mM), dog (HD(50)=1.02 mM) and human (HD(50)=2.07 mM). Acts synergistically with beta-hemolysins from S.aureus ATCC 25923. Cytotoxic towards human dermal fibroblasts. This Staphylococcus cohnii subsp. cohnii protein is Hemolysin H3C.